A 78-amino-acid chain; its full sequence is Acyl carrier protein (78 aa).

In terms of domain architecture, Carrier spans Ser-2–Ala-77. Ser-37 carries the post-translational modification O-(pantetheine 4'-phosphoryl)serine.

This sequence belongs to the acyl carrier protein (ACP) family. Post-translationally, 4'-phosphopantetheine is transferred from CoA to a specific serine of apo-ACP by AcpS. This modification is essential for activity because fatty acids are bound in thioester linkage to the sulfhydryl of the prosthetic group.

The protein localises to the cytoplasm. It participates in lipid metabolism; fatty acid biosynthesis. Carrier of the growing fatty acid chain in fatty acid biosynthesis. The sequence is that of Acyl carrier protein from Stutzerimonas stutzeri (strain A1501) (Pseudomonas stutzeri).